The chain runs to 283 residues: MEEIKETVEKKNKEKKYLNDYKIISEGNNIKVLQKKDFKPKFSLVSYKNYEQNFDFENAKIVSTNFAIDRHIKMKNPPDPFVFIKMPSSKLVQSQLKLYYENEGYKDIPVWITPCSAFMRYIKSYPIVGTVTETMEKKKGFTNRFLSTSETKASVSVGFFGCESSMEVTSGYEYEDTVTSEETRSWSQTLNEGSYIVYQNVLVYAYIIYGGSYKPYIDQMNKFNPGLNIKFFREDKCIFFVPINRDDAFTLRYQDNTWDPVEYDVLIDYLGQNQDKWFSGGLP.

It is found in the cytoplasm. Functionally, knockout of the gene for this protein causes small aggregate formation. May regulate the secretion or processing of a secreted factor that regulates aggregate size. This is Small aggregate formation protein (smlA) from Dictyostelium discoideum (Social amoeba).